Reading from the N-terminus, the 299-residue chain is Prohibitin-2 (299 aa).

Ala2 bears the N-acetylalanine mark. A necessary for transcriptional repression region spans residues 19 to 49 (MGTALKLLLGAGAVAYGVRESVFTVEGGHRA). Phosphotyrosine is present on Tyr128. At Lys147 the chain carries N6-acetyllysine. Residues 150-174 (ASQLITQRAQVSLLIRRELTERAKD) are necessary for transcriptional repression. At Ser151 the chain carries Phosphoserine. The stretch at 190–238 (SREYTAAVEAKQVAQQEAQRAQFLVEKAKQEQRQKIVQAEGEAEAAKML) forms a coiled coil. 4 positions are modified to N6-acetyllysine: Lys200, Lys236, Lys250, and Lys262.

Belongs to the prohibitin family. The mitochondrial prohibitin complex consists of two subunits (PHB1 and PHB2), assembled into a membrane-associated ring-shaped supercomplex of approximately 1 mDa. Interacts with ESR1, HDAC1 and HDAC5. Interacts with ZNF703. Interacts with STOML2. Interacts with ARFGEF3. Interacts with SPHK2. Interacts with COX4I1; the interaction associates PHB2 with COX. Interacts with MAP1LC3B (membrane-bound form LC3-II); the interaction is direct and upon mitochondrial depolarization and proteasome-dependent outer membrane rupture. Interacts with IGFBP6 (via C-terminal domain). Interacts with CLPB. Interacts with CD86 (via cytoplasmic domain); the interactions increases after priming with CD40. Interacts with AFG3L2. Interacts with DNAJC19. Interacts with AKT2; this interaction may be important for myogenic differentiation. In terms of processing, phosphorylated. Tyrosine phosphorylation is indirectly stimulated by IGFBP6. Widely expressed in different tissues.

It localises to the mitochondrion inner membrane. Its subcellular location is the cytoplasm. The protein resides in the nucleus. The protein localises to the cell membrane. Functionally, protein with pleiotropic attributes mediated in a cell-compartment- and tissue-specific manner, which include the plasma membrane-associated cell signaling functions, mitochondrial chaperone, and transcriptional co-regulator of transcription factors and sex steroid hormones in the nucleus. Its function is as follows. In the mitochondria, together with PHB, forms large ring complexes (prohibitin complexes) in the inner mitochondrial membrane (IMM) and functions as a chaperone protein that stabilizes mitochondrial respiratory enzymes and maintains mitochondrial integrity in the IMM, which is required for mitochondrial morphogenesis, neuronal survival, and normal lifespan. The prohibitin complex, with DNAJC19, regulates cardiolipin remodeling and the protein turnover of OMA1 in a cardiolipin-binding manner. Also regulates cytochrome-c oxidase assembly (COX) and mitochondrial respiration. Binding to sphingoid 1-phosphate (SPP) modulates its regulator activity. Has a key role of mitophagy receptor involved in targeting mitochondria for autophagic degradation. Involved in mitochondrial-mediated antiviral innate immunity, activates RIG-I-mediated signal transduction and production of IFNB1 and pro-inflammatory cytokine IL6. In terms of biological role, in the nucleus, serves as transcriptional co-regulator. Acts as a mediator of transcriptional repression by nuclear hormone receptors via recruitment of histone deacetylases. Functions as an estrogen receptor (ER)-selective coregulator that potentiates the inhibitory activities of antiestrogens and represses the activity of estrogens. Competes with NCOA1 for modulation of ER transcriptional activity. In the plasma membrane, is involved in IGFBP6-induced cell migration. Cooperates with CD86 to mediate CD86-signaling in B lymphocytes that regulates the level of IgG1 produced through the activation of distal signaling intermediates. Upon CD40 engagement, required to activate NF-kappa-B signaling pathway via phospholipase C and protein kinase C activation. The protein is Prohibitin-2 of Mus musculus (Mouse).